The following is a 362-amino-acid chain: Transcription factor bHLH133 (362 aa).

One can recognise a bHLH domain in the interval 209 to 258; sequence LQVPSSQSTLKVRKEKLGGRIASLHQLVSPFGKTDTASVLSEAIGYIRFL.

It belongs to the bHLH protein family. As to quaternary structure, homodimer.

The protein localises to the nucleus. The chain is Transcription factor bHLH133 (BHLH133) from Arabidopsis thaliana (Mouse-ear cress).